Here is a 297-residue protein sequence, read N- to C-terminus: GATA transcription factor 24 (297 aa).

A Tify domain is found at 73 to 108 (GIENGDQLTLSFQGQVYVFDRVSPEKVQAVLLLLGG). Residues 143-185 (RLASLLRFREKRKGRNFDKTIRYTVRKEVALRMQRKKGQFTSA) form the CCT domain. Positions 178 to 203 (KKGQFTSAKSSNDDSGSTGSDWGSNQ) are disordered. A compositionally biased stretch (low complexity) spans 190-201 (DDSGSTGSDWGS). The GATA-type zinc-finger motif lies at 213-269 (QKPEVLCRHCGTSEKSTPMMRRGPDGPRTLCNACGLMWANKGTLRDLSKVPPPQTPQ).

It belongs to the type IV zinc-finger family. Class C subfamily. In terms of tissue distribution, predominantly expressed in shoot apices, inflorescences and roots.

The protein resides in the nucleus. Transcriptional activator that specifically binds 5'-GATA-3' or 5'-GAT-3' motifs within gene promoters. In Arabidopsis thaliana (Mouse-ear cress), this protein is GATA transcription factor 24 (GATA24).